The following is a 553-amino-acid chain: MASISPTSSSVAALRGHPVQFVKGGAVSKEAKGSISFSPVANSNNANVKFTGLRVAASLKRDGAFPGDGYSGNDNTVLPKSTSVRGQDYPTADSVLPTESIIVPEISNAGLKCVADMFSDEDKDTEQDLDSPTEGFSSISEAIKDIQQGKLVIVVDDESRENEGDLIMAASLVTPEAMAFVVRYGTGIVCVSMKEEDLERLNLPLMVATKENEEKLCTAFTVTVDAKEGTTTGVSAKDRAKTVMTLASPDSKPEDFNRPGHIFPLKYREGGVLKRAGHTEASVDLAMLAGLPPAAVLCEIVDEDGSMARLPKLRVFAERENLKIVSIADLIRYRRKRDRLVERSSVARLPLRWGNVRAYCYRSVIDGIEHIAMVKGEIGDGQGVLVRVHSECLTGDIFGSARCDCGDQLAMAMEMIEKAGRGVLVYLRGHEGRGIGLGHKLRAYNLQDDGRDTVEANEDLGLPVDSREYGIGAQILRDLGVRSMKLMTNNPAKYGGLKGYGLSIVGRVPLVTPITSENRRYLETKRTKMGHVYGLANGQASHQTGSNGAKGEH.

A chloroplast-targeting transit peptide spans 1 to 56 (MASISPTSSSVAALRGHPVQFVKGGAVSKEAKGSISFSPVANSNNANVKFTGLRVA). The interval 62–336 (DGAFPGDGYS…IADLIRYRRK (275 aa)) is DHBP synthase. The tract at residues 70–90 (YSGNDNTVLPKSTSVRGQDYP) is disordered. Residues 72–85 (GNDNTVLPKSTSVR) show a composition bias toward polar residues. D-ribulose 5-phosphate-binding positions include 160 to 161 (RE), aspartate 165, 275 to 279 (RAGHT), and glutamate 299. Residue glutamate 161 coordinates Mg(2+). Residue histidine 278 participates in Mg(2+) binding. The GTP cyclohydrolase II stretch occupies residues 337 to 553 (RDRLVERSSV…TGSNGAKGEH (217 aa)). Residue 387-391 (RVHSE) coordinates GTP. Zn(2+) contacts are provided by cysteine 392, cysteine 403, and cysteine 405. GTP contacts are provided by residues glutamine 408, 431–433 (EGR), and threonine 453. Catalysis depends on aspartate 465, which acts as the Proton acceptor; for GTP cyclohydrolase activity. Arginine 467 functions as the Nucleophile; for GTP cyclohydrolase activity in the catalytic mechanism. Residues threonine 488 and lysine 493 each coordinate GTP.

It in the N-terminal section; belongs to the DHBP synthase family. In the C-terminal section; belongs to the GTP cyclohydrolase II family. Mg(2+) serves as cofactor. Requires Mn(2+) as cofactor. The cofactor is Zn(2+).

It localises to the plastid. Its subcellular location is the chloroplast. It carries out the reaction D-ribulose 5-phosphate = (2S)-2-hydroxy-3-oxobutyl phosphate + formate + H(+). The enzyme catalyses GTP + 4 H2O = 2,5-diamino-6-hydroxy-4-(5-phosphoribosylamino)-pyrimidine + formate + 2 phosphate + 3 H(+). Its pathway is cofactor biosynthesis; riboflavin biosynthesis; 2-hydroxy-3-oxobutyl phosphate from D-ribulose 5-phosphate: step 1/1. It functions in the pathway cofactor biosynthesis; riboflavin biosynthesis; 5-amino-6-(D-ribitylamino)uracil from GTP: step 1/4. Functionally, involved in riboflavin biosynthesis. Catalyzes both the conversion of D-ribulose 5-phosphate to formate and 3,4-dihydroxy-2-butanone 4-phosphate and the conversion of GTP to 2,5-diamino-6-ribosylamino-4(3H)-pyrimidinone 5'-phosphate (DARP), formate and pyrophosphate. In Oryza sativa subsp. japonica (Rice), this protein is Probable bifunctional riboflavin biosynthesis protein RIBA 2, chloroplastic (RIBA2).